The chain runs to 158 residues: Superoxide dismutase [Cu-Zn] (158 aa).

His-46, His-48, and His-63 together coordinate Cu cation. Cys-57 and Cys-149 are disulfide-bonded. Residues His-63, His-71, His-80, and Asp-83 each contribute to the Zn(2+) site. A Cu cation-binding site is contributed by His-120.

Belongs to the Cu-Zn superoxide dismutase family. Homodimer. Cu cation is required as a cofactor. Zn(2+) serves as cofactor.

Its subcellular location is the cytoplasm. It carries out the reaction 2 superoxide + 2 H(+) = H2O2 + O2. Destroys radicals which are normally produced within the cells and which are toxic to biological systems. This Onchocerca volvulus protein is Superoxide dismutase [Cu-Zn] (sod-1).